Reading from the N-terminus, the 511-residue chain is Xylose import ATP-binding protein XylG (511 aa).

ABC transporter domains follow at residues 6–244 and 261–506; these read LEMR…VGRE and FEAR…IGKP. Residue 38–45 participates in ATP binding; that stretch reads GENGAGKS.

This sequence belongs to the ABC transporter superfamily. Xylose importer (TC 3.A.1.2.4) family. The complex is composed of two ATP-binding proteins (XylG), two transmembrane proteins (XylH) and a solute-binding protein (XylF).

Its subcellular location is the cell inner membrane. The enzyme catalyses D-xylose(out) + ATP + H2O = D-xylose(in) + ADP + phosphate + H(+). Its function is as follows. Part of the ABC transporter complex XylFGH involved in xylose import. Responsible for energy coupling to the transport system. The sequence is that of Xylose import ATP-binding protein XylG from Brucella abortus (strain 2308).